A 373-amino-acid chain; its full sequence is 4-hydroxy-3-methylbut-2-en-1-yl diphosphate synthase (flavodoxin) (373 aa).

Residues Cys270, Cys273, Cys305, and Glu312 each contribute to the [4Fe-4S] cluster site.

This sequence belongs to the IspG family. [4Fe-4S] cluster serves as cofactor.

The enzyme catalyses (2E)-4-hydroxy-3-methylbut-2-enyl diphosphate + oxidized [flavodoxin] + H2O + 2 H(+) = 2-C-methyl-D-erythritol 2,4-cyclic diphosphate + reduced [flavodoxin]. It participates in isoprenoid biosynthesis; isopentenyl diphosphate biosynthesis via DXP pathway; isopentenyl diphosphate from 1-deoxy-D-xylulose 5-phosphate: step 5/6. In terms of biological role, converts 2C-methyl-D-erythritol 2,4-cyclodiphosphate (ME-2,4cPP) into 1-hydroxy-2-methyl-2-(E)-butenyl 4-diphosphate. The polypeptide is 4-hydroxy-3-methylbut-2-en-1-yl diphosphate synthase (flavodoxin) (Sodalis glossinidius (strain morsitans)).